Reading from the N-terminus, the 505-residue chain is MAQIDFRKKINWHRRYRSPQGVKTEHEILRIFESDRGRIINSPAIRRLQQKTQVFPLERNAAVRTRLTHSMEVQQVGRYIAKEILSRLKELKLLEAYGLDELTGPFESIVEMSCLMHDIGNPPFGHFGEAAINDWFRQRLYPEDAESQPLTDDRCSVAALRLRDGEEPLNALRRKIRQDLCHFEGNAQGIRLVHTLMRMNLTWAQVGGILKYTRPAWWRGETPETHHYLMKKPGYYLSEEAYIARLRKELNLALYSRFPLTWIMEAADDISYCVADLEDAVEKRIFTVEQLYHHLHEAWGQHEKGSLFSLVVENAWEKSRSNSLSRSTEDQFFMYLRVNTLNKLVPYAAQRFIDNLPAIFAGTFNHALLEDASECSDLLKLYKNVAVKHVFSHPDVEQLELQGYRVISGLLEIYRPLLNLSLSDFTELVEKERVKRFPIETRLFHKLSTRHRLAYVEAVSKLPSDSPEFPLWEYYYRCRLLQDYISGMTDLYAWDEYRRLMAVEQ.

Residues 66-273 (RLTHSMEVQQ…MEAADDISYC (208 aa)) form the HD domain.

This sequence belongs to the dGTPase family. Type 1 subfamily. Homotetramer. It depends on Mg(2+) as a cofactor.

It carries out the reaction dGTP + H2O = 2'-deoxyguanosine + triphosphate + H(+). In terms of biological role, dGTPase preferentially hydrolyzes dGTP over the other canonical NTPs. The sequence is that of Deoxyguanosinetriphosphate triphosphohydrolase from Escherichia coli O127:H6 (strain E2348/69 / EPEC).